Consider the following 62-residue polypeptide: Sperm protamine P1 (62 aa).

A disordered region spans residues 1 to 62; that stretch reads MARYRHSRSR…RYSRRRRRRY (62 aa).

The protein belongs to the protamine P1 family. In terms of tissue distribution, testis.

The protein resides in the nucleus. It is found in the chromosome. Functionally, protamines substitute for histones in the chromatin of sperm during the haploid phase of spermatogenesis. They compact sperm DNA into a highly condensed, stable and inactive complex. The sequence is that of Sperm protamine P1 (PRM1) from Bettongia penicillata (Brush-tailed bettong).